The sequence spans 257 residues: MTAFVPVSLPSTSALNDAYVKSQLTKWDLLRNLRCVAVRYTKYYHKLQGQELLADLFRDEKVQEAFQVLRKGGAWGQLGGPVTKVDATLLASSLTRMDLFDKLTETSPPIVRSNGDIGKCMEDNREGFQVSDQLRELILVEESEHAALFSEAERDELLWRLFEHVVLGGACCQFEDKVEPYVETSKRLYKELVCAQKDPATGKVQTVSAVYKINSIQGDSGPLELYPSRSRQNFCYAAVDPVRRIVKILYHAYVPYW.

The protein belongs to the CFAP300 family.

Its subcellular location is the cytoplasm. The protein localises to the cytoskeleton. It localises to the flagellum axoneme. Its function is as follows. Cilium- and flagellum-specific protein that plays a role in axonemal structure organization and motility. Plays a role in outer and inner dynein arm assembly. The sequence is that of Cilia- and flagella-associated protein 300 from Chlamydomonas reinhardtii (Chlamydomonas smithii).